We begin with the raw amino-acid sequence, 1254 residues long: Unconventional myosin-VI (1254 aa).

The 52-residue stretch at 2–53 (EDGKPVWAPHPTDGFQVGNIVDIGPDSLTIEPLNQKGKTFLALINQVFPAEE) folds into the Myosin N-terminal SH3-like domain. In terms of domain architecture, Myosin motor spans 57 to 772 (KDVEDNCSLM…KFAEFDQIMK (716 aa)). 151 to 158 (GESGAGKT) lines the ATP pocket. Serine 267 carries the phosphoserine modification. The interval 273 to 317 (YLNRGCTRYFANKETDKQILQNRKSPEYLKAGSLKDPLLDDHGDF) is responsible for slow ATPase activity. Threonine 406 is modified (phosphothreonine). Serine 605 is modified (phosphoserine). The interval 666 to 673 (FIRCIKPN) is actin-binding. The tract at residues 783–811 (KRVNHWLICSRWKKVQWCSLSVIKLKNKI) is required for binding calmodulin. Residues 814–843 (RAEACIKMQKTIRMWLCKRRHKPRIDGLVK) form the IQ domain. Residues 836 to 917 (PRIDGLVKVG…AVLLSALQKK (82 aa)) form a three-helix bundle region. An SAH region spans residues 918-985 (KQQEEEAERL…EDDEKRIQAE (68 aa)). Residues 935–956 (EKERKRREEDEQRRRKEEEERR) are disordered. A Phosphoserine modification is found at serine 1026. Residues 1037 to 1245 (RGPAVQATKA…ESRQARPTYA (209 aa)) are interaction with TAX1BP1 and CALCOCO2/NDP52. The tract at residues 1085–1087 (RRL) is interaction with OPTN. Positions 1096–1117 (KNKKRNTETEQRAPKSVTDYAQ) are disordered. An interaction with TOM1 region spans residues 1117–1245 (QQNPAVQLPA…ESRQARPTYA (129 aa)).

The protein belongs to the TRAFAC class myosin-kinesin ATPase superfamily. Myosin family. In terms of assembly, homodimer; dimerization seems to implicate the unfolding of the three-helix bundle region creating an additional calmodulin binding site, and cargo binding. Component of the DISP/DOCK7-induced septin displacement complex, at least composed of DOCK7, LRCH3 and MYO6. Able to function as a monomer under specific conditions in vitro. Forms a complex with CFTR and DAB2 in the apical membrane of epithelial cells. Binding to calmodulin through a unique insert, not found in other myosins, located in the neck region between the motor domain and the IQ domain appears to contribute to the directionality reversal. This interaction occurs only if the C-terminal lobe of calmodulin is occupied by calcium. Interaction with F-actin/ACTN1 occurs only at the apical brush border domain of the proximal tubule cells. Interacts with DAB2. In vitro, the C-terminal globular tail binds a C-terminal region of DAB2. Interacts with CFTR. Interacts with CABP5. Interacts (via residues 1117-1245) with TOM1 (via residues 392-463). Interacts (via residues 1060-1285) with OPTN. Interacts (via residues 1060-1285) with TAX1BP1 and CALCOCO2/NDP52. Interacts with TOM1L2. Interacts with CLIC5; may work together in a complex which also includes RDX and MYO6 to stabilize linkages between the plasma membrane and subjacent actin cytoskeleton at the base of stereocilia. Post-translationally, phosphorylation in the motor domain, induced by EGF, results in translocation of MYO6 from the cell surface to membrane ruffles and affects F-actin dynamics. Phosphorylated in vitro by p21-activated kinase (PAK). As to expression, expressed in all tissues examined including kidney cortex, intestinal mucosa, liver, lung, heart, jowl muscle, brain cortex and medulla, and in the epithelial cell line, LLC-PK1 (at protein level). In the kidney, located to the brush border of adult kidney proximal tubule cells.

It localises to the golgi apparatus. The protein localises to the trans-Golgi network membrane. It is found in the nucleus. The protein resides in the cytoplasm. Its subcellular location is the perinuclear region. It localises to the membrane. The protein localises to the clathrin-coated pit. It is found in the cytoplasmic vesicle. The protein resides in the clathrin-coated vesicle. Its subcellular location is the cell projection. It localises to the filopodium. The protein localises to the ruffle membrane. It is found in the microvillus. The protein resides in the cytosol. In terms of biological role, myosins are actin-based motor molecules with ATPase activity. Unconventional myosins serve in intracellular movements. Myosin 6 is a reverse-direction motor protein that moves towards the minus-end of actin filaments. Has slow rate of actin-activated ADP release due to weak ATP binding. Functions in a variety of intracellular processes such as vesicular membrane trafficking and cell migration. Required for the structural integrity of the Golgi apparatus via the p53-dependent pro-survival pathway. Appears to be involved in a very early step of clathrin-mediated endocytosis in polarized epithelial cells. Together with TOM1, mediates delivery of endocytic cargo to autophagosomes thereby promoting autophagosome maturation and driving fusion with lysosomes. Links TOM1 with autophagy receptors, such as TAX1BP1; CALCOCO2/NDP52 and OPTN. May act as a regulator of F-actin dynamics. As part of the DISP complex, may regulate the association of septins with actin and thereby regulate the actin cytoskeleton. May play a role in transporting DAB2 from the plasma membrane to specific cellular targets. May play a role in the extension and network organization of neurites. Required for structural integrity of inner ear hair cells. Required for the correct localization of CLIC5 and RDX at the stereocilium base. Modulates RNA polymerase II-dependent transcription. This is Unconventional myosin-VI (MYO6) from Sus scrofa (Pig).